A 360-amino-acid polypeptide reads, in one-letter code: Phosphoserine aminotransferase (360 aa).

Arg-41 provides a ligand contact to L-glutamate. 4 residues coordinate pyridoxal 5'-phosphate: Trp-101, Thr-152, Asp-172, and Gln-195. Lys-196 bears the N6-(pyridoxal phosphate)lysine mark. A pyridoxal 5'-phosphate-binding site is contributed by 237–238; the sequence is NT.

This sequence belongs to the class-V pyridoxal-phosphate-dependent aminotransferase family. SerC subfamily. In terms of assembly, homodimer. It depends on pyridoxal 5'-phosphate as a cofactor.

Its subcellular location is the cytoplasm. The enzyme catalyses O-phospho-L-serine + 2-oxoglutarate = 3-phosphooxypyruvate + L-glutamate. It catalyses the reaction 4-(phosphooxy)-L-threonine + 2-oxoglutarate = (R)-3-hydroxy-2-oxo-4-phosphooxybutanoate + L-glutamate. Its pathway is amino-acid biosynthesis; L-serine biosynthesis; L-serine from 3-phospho-D-glycerate: step 2/3. It functions in the pathway cofactor biosynthesis; pyridoxine 5'-phosphate biosynthesis; pyridoxine 5'-phosphate from D-erythrose 4-phosphate: step 3/5. In terms of biological role, catalyzes the reversible conversion of 3-phosphohydroxypyruvate to phosphoserine and of 3-hydroxy-2-oxo-4-phosphonooxybutanoate to phosphohydroxythreonine. The chain is Phosphoserine aminotransferase from Burkholderia lata (strain ATCC 17760 / DSM 23089 / LMG 22485 / NCIMB 9086 / R18194 / 383).